The primary structure comprises 388 residues: Amylovoran biosynthesis protein AmsL (388 aa).

Helical transmembrane passes span 24 to 44 (VLLS…ISWF), 47 to 67 (LPQL…LGSL), 97 to 117 (FTVI…LGLF), 231 to 251 (FVIM…SPVI), 297 to 317 (FYWN…VWIW), and 359 to 379 (ISVS…NLFI).

Belongs to the polysaccharide synthase family.

The protein resides in the cell membrane. It participates in glycan metabolism; exopolysaccharide biosynthesis. Involved in the biosynthesis of amylovoran which functions as a virulence factor. This Erwinia amylovora (Fire blight bacteria) protein is Amylovoran biosynthesis protein AmsL (amsL).